The primary structure comprises 599 residues: Aspartate--tRNA(Asp/Asn) ligase (599 aa).

Position 183 (Glu-183) interacts with L-aspartate. Positions 207–210 are aspartate; sequence QIFK. Arg-229 is an L-aspartate binding site. ATP contacts are provided by residues 229-231 and Gln-238; that span reads RDE. An L-aspartate-binding site is contributed by His-456. An ATP-binding site is contributed by Glu-490. Residue Arg-497 coordinates L-aspartate. 542-545 is a binding site for ATP; it reads GLDR.

It belongs to the class-II aminoacyl-tRNA synthetase family. Type 1 subfamily. As to quaternary structure, homodimer.

It localises to the cytoplasm. It catalyses the reaction tRNA(Asx) + L-aspartate + ATP = L-aspartyl-tRNA(Asx) + AMP + diphosphate. In terms of biological role, aspartyl-tRNA synthetase with relaxed tRNA specificity since it is able to aspartylate not only its cognate tRNA(Asp) but also tRNA(Asn). Reaction proceeds in two steps: L-aspartate is first activated by ATP to form Asp-AMP and then transferred to the acceptor end of tRNA(Asp/Asn). This Protochlamydia amoebophila (strain UWE25) protein is Aspartate--tRNA(Asp/Asn) ligase.